The sequence spans 189 residues: ATP-dependent protease subunit HslV (189 aa).

Threonine 12 is a catalytic residue. Na(+) is bound by residues alanine 172, cysteine 175, and threonine 178.

Belongs to the peptidase T1B family. HslV subfamily. As to quaternary structure, a double ring-shaped homohexamer of HslV is capped on each side by a ring-shaped HslU homohexamer. The assembly of the HslU/HslV complex is dependent on binding of ATP.

The protein localises to the cytoplasm. The catalysed reaction is ATP-dependent cleavage of peptide bonds with broad specificity.. Allosterically activated by HslU binding. Functionally, protease subunit of a proteasome-like degradation complex believed to be a general protein degrading machinery. This Ehrlichia ruminantium (strain Welgevonden) protein is ATP-dependent protease subunit HslV.